The primary structure comprises 735 residues: Putative RNA polymerase II subunit B1 CTD phosphatase RPAP2 homolog (735 aa).

The RTR1-type zinc-finger motif lies at 33–118 (AARKLMSRSD…LQEARTLEFD (86 aa)). Zn(2+) contacts are provided by C56, C61, C94, and C98. 3 disordered regions span residues 179-201 (VPFD…QEKH), 349-374 (GKNT…KSRK), and 519-538 (EHSE…WPNK). A compositionally biased stretch (low complexity) spans 349–364 (GKNTLSGSSSGSNTKG). Acidic residues predominate over residues 519–530 (EHSEEEMTEEEP).

Belongs to the RPAP2 family.

It localises to the nucleus. It catalyses the reaction O-phospho-L-seryl-[protein] + H2O = L-seryl-[protein] + phosphate. The enzyme catalyses O-phospho-L-threonyl-[protein] + H2O = L-threonyl-[protein] + phosphate. Its function is as follows. Putative RNA polymerase II subunit B1 C-terminal domain (CTD) phosphatase involved in RNA polymerase II transcription regulation. This is Putative RNA polymerase II subunit B1 CTD phosphatase RPAP2 homolog from Arabidopsis thaliana (Mouse-ear cress).